The following is a 534-amino-acid chain: MISKTEDSGDPLDQDFAEVVKQTLDRWHIPGMSVAVVDGPDTWTKGYGLAQLPNTNVTPDTLFYTGSTTKAFTAAVLSLLVDDNKNYPQVQWNTPVNQLLRDDFVLSHEWDTNNITIEDILSHRTGMPRHEFAFGGDYDGHPASLRDIVRSVRYMQRSAPPRTTYQYSNLMFIVASYLIETLTGKWIGDVFREKIWRPLGMDSTYLSLEDARASGKELAQGYLYNSSLPGYEPVPLKNKPEVSGAGAAISNIKDYAKWATALLKRAPDVLSPAGYSAIWSARTVTPTHDPFITPSAYALAWNTQVYQGVEIVWHDGGIDGFGTEIALIPSLGFAVVTQANTTYSSNYAGTALVYHLIDKKLDVAPDKRFDWNKWYEDLERQMKEAVKNARQTFYPTVPSPAPPPTLPIGKYTGNYWHPAYRQLTILWDEERNLLYADRKDSTTPCQLTFIPVSREFFLVRLTVVGAEAMLPAEFRLGPDGTPSMVGILWEPSLGDEKIWLKKEGDTHFKEMYGGIVDSTAGKKRVPDTIHPIDL.

Belongs to the peptidase S12 family.

The protein operates within secondary metabolite biosynthesis. Its function is as follows. Hydrolase; part of the gene cluster that mediates the biosynthesis of the unguisins, gamma-aminobutyric acid (GABA)-containing fungal cyclic heptapeptides with the amino acid sequence cyclo-(D-Ala1-D-Val2-L-Leu3-beta-MePhe4-D-Ala5-D-Trp6-GABA7) for unguisin H and cyclo-(D-Ala1-D-Ala2-L-Leu3-beta-MePhe4-D-Ala5-D-Trp6-GABA7) for unguisin I. Within the pathway, the hydrolase ungD' catalyzes the hydrolysis between the D-tryptophan and GABA residues of unguisins H and I to produce the corresponding linear peptides. The alanine racemase ungC' catalyzes the interconversion of L-alanine and D-alanine, providing the D-alanine which is accepted by the first adenylation domain of the nonribosomal peptide synthetase (NRPS) ungA', whereas the methyltransferase ungE' provides the (2R,3R)-beta-methylphenylalanine residue incorporated by the module 4. UngA' is the main enzyme within the cluster which condenses the 7 residues using its respective 7 modules. The terminal condensation domain (Ct) is involved in cyclization with D-alanine and thereby releasing of unguisins H and I. The sequence is that of Unguisins hydrolase ungD' from Aspergillus campestris (strain IBT 28561).